The primary structure comprises 462 residues: Glycine--tRNA ligase (462 aa).

The substrate site is built by R98 and E174. ATP contacts are provided by residues 206 to 208, 216 to 221, 290 to 291, and 334 to 337; these read RNE, FRTREF, EL, and GADR. A substrate-binding site is contributed by 221–225; it reads FEQME. Residue 330 to 334 participates in substrate binding; that stretch reads EPSLG.

This sequence belongs to the class-II aminoacyl-tRNA synthetase family. Homodimer.

The protein resides in the cytoplasm. It catalyses the reaction tRNA(Gly) + glycine + ATP = glycyl-tRNA(Gly) + AMP + diphosphate. Its function is as follows. Catalyzes the attachment of glycine to tRNA(Gly). The polypeptide is Glycine--tRNA ligase (Lachnoclostridium phytofermentans (strain ATCC 700394 / DSM 18823 / ISDg) (Clostridium phytofermentans)).